Reading from the N-terminus, the 311-residue chain is 4-diphosphocytidyl-2-C-methyl-D-erythritol kinase (311 aa).

Residue K9 is part of the active site. 95 to 105 (PLGAGLAGGST) contacts ATP. D137 is a catalytic residue.

The protein belongs to the GHMP kinase family. IspE subfamily.

The catalysed reaction is 4-CDP-2-C-methyl-D-erythritol + ATP = 4-CDP-2-C-methyl-D-erythritol 2-phosphate + ADP + H(+). The protein operates within isoprenoid biosynthesis; isopentenyl diphosphate biosynthesis via DXP pathway; isopentenyl diphosphate from 1-deoxy-D-xylulose 5-phosphate: step 3/6. In terms of biological role, catalyzes the phosphorylation of the position 2 hydroxy group of 4-diphosphocytidyl-2C-methyl-D-erythritol. The sequence is that of 4-diphosphocytidyl-2-C-methyl-D-erythritol kinase from Thermosynechococcus vestitus (strain NIES-2133 / IAM M-273 / BP-1).